The sequence spans 201 residues: Recombination protein RecR (201 aa).

A C4-type zinc finger spans residues 60–75; that stretch reads CSTCGNVDTADPCMIC. Residues 83–178 enclose the Toprim domain; that stretch reads GTIIVVEDVS…KVTRLAHGVP (96 aa).

Belongs to the RecR family.

Functionally, may play a role in DNA repair. It seems to be involved in an RecBC-independent recombinational process of DNA repair. It may act with RecF and RecO. The polypeptide is Recombination protein RecR (Mesorhizobium japonicum (strain LMG 29417 / CECT 9101 / MAFF 303099) (Mesorhizobium loti (strain MAFF 303099))).